The sequence spans 231 residues: Uracil-DNA glycosylase (231 aa).

Asp-74 serves as the catalytic Proton acceptor.

This sequence belongs to the uracil-DNA glycosylase (UDG) superfamily. UNG family.

Its subcellular location is the cytoplasm. The catalysed reaction is Hydrolyzes single-stranded DNA or mismatched double-stranded DNA and polynucleotides, releasing free uracil.. Its function is as follows. Excises uracil residues from the DNA which can arise as a result of misincorporation of dUMP residues by DNA polymerase or due to deamination of cytosine. This Campylobacter jejuni subsp. jejuni serotype O:6 (strain 81116 / NCTC 11828) protein is Uracil-DNA glycosylase.